The primary structure comprises 118 residues: MSDKEFMWALKNGDLDEVKDYVAKGEDVNRTLEGGRKPLHYAADCGQLEILEFLLLKGADINAPDKHNITPLLSAVYEGHVSCVKLLLSKGADKTVKGPDGLTAFEATDNQAIKTLLQ.

3 ANK repeats span residues 1-30 (MSDK…DVNR), 34-65 (GGRK…NAPD), and 67-98 (HNIT…TVKG).

The protein belongs to the myotrophin family.

It is found in the cytoplasm. The protein resides in the nucleus. Its subcellular location is the perinuclear region. In terms of biological role, regulates NF-kappa-B transcription factor activity. Promotes growth of cardiomyocytes, but not cardiomyocyte proliferation. Promotes cardiac muscle hypertrophy. Plays a role in the regulation of the growth of actin filaments. Inhibits the activity of the F-actin-capping protein complex. This chain is Myotrophin (MTPN), found in Gallus gallus (Chicken).